Consider the following 440-residue polypeptide: Serine hydroxymethyltransferase (440 aa).

(6S)-5,6,7,8-tetrahydrofolate is bound by residues leucine 119 and 123 to 125 (GHL). Position 228 is an N6-(pyridoxal phosphate)lysine (lysine 228). A (6S)-5,6,7,8-tetrahydrofolate-binding site is contributed by 370–372 (SPF).

Belongs to the SHMT family. In terms of assembly, homodimer. Pyridoxal 5'-phosphate is required as a cofactor.

The protein localises to the cytoplasm. The catalysed reaction is (6R)-5,10-methylene-5,6,7,8-tetrahydrofolate + glycine + H2O = (6S)-5,6,7,8-tetrahydrofolate + L-serine. Its pathway is one-carbon metabolism; tetrahydrofolate interconversion. The protein operates within amino-acid biosynthesis; glycine biosynthesis; glycine from L-serine: step 1/1. In terms of biological role, catalyzes the reversible interconversion of serine and glycine with tetrahydrofolate (THF) serving as the one-carbon carrier. This reaction serves as the major source of one-carbon groups required for the biosynthesis of purines, thymidylate, methionine, and other important biomolecules. Also exhibits THF-independent aldolase activity toward beta-hydroxyamino acids, producing glycine and aldehydes, via a retro-aldol mechanism. This Chlorobaculum parvum (strain DSM 263 / NCIMB 8327) (Chlorobium vibrioforme subsp. thiosulfatophilum) protein is Serine hydroxymethyltransferase.